A 228-amino-acid polypeptide reads, in one-letter code: Enolase-phosphatase E1 (228 aa).

It belongs to the HAD-like hydrolase superfamily. MasA/MtnC family. Monomer. It depends on Mg(2+) as a cofactor.

It carries out the reaction 5-methylsulfanyl-2,3-dioxopentyl phosphate + H2O = 1,2-dihydroxy-5-(methylsulfanyl)pent-1-en-3-one + phosphate. It functions in the pathway amino-acid biosynthesis; L-methionine biosynthesis via salvage pathway; L-methionine from S-methyl-5-thio-alpha-D-ribose 1-phosphate: step 3/6. Its pathway is amino-acid biosynthesis; L-methionine biosynthesis via salvage pathway; L-methionine from S-methyl-5-thio-alpha-D-ribose 1-phosphate: step 4/6. Bifunctional enzyme that catalyzes the enolization of 2,3-diketo-5-methylthiopentyl-1-phosphate (DK-MTP-1-P) into the intermediate 2-hydroxy-3-keto-5-methylthiopentenyl-1-phosphate (HK-MTPenyl-1-P), which is then dephosphorylated to form the acireductone 1,2-dihydroxy-3-keto-5-methylthiopentene (DHK-MTPene). This chain is Enolase-phosphatase E1, found in Picosynechococcus sp. (strain ATCC 27264 / PCC 7002 / PR-6) (Agmenellum quadruplicatum).